Here is a 341-residue protein sequence, read N- to C-terminus: Ketol-acid reductoisomerase (NADP(+)) (341 aa).

A KARI N-terminal Rossmann domain is found at 2 to 182 (TDIVYDKDAD…GGLRAGGIRT (181 aa)). NADP(+) contacts are provided by residues 25-28 (YGSQ), lysine 48, serine 51, serine 53, and 83-86 (DQHQ). Histidine 108 is a catalytic residue. Residue glycine 134 participates in NADP(+) binding. One can recognise a KARI C-terminal knotted domain in the interval 183 to 328 (TFTEETETDL…RELRKLFAWN (146 aa)). Aspartate 191, glutamate 195, glutamate 227, and glutamate 231 together coordinate Mg(2+). Position 252 (serine 252) interacts with substrate.

Belongs to the ketol-acid reductoisomerase family. The cofactor is Mg(2+).

The catalysed reaction is (2R)-2,3-dihydroxy-3-methylbutanoate + NADP(+) = (2S)-2-acetolactate + NADPH + H(+). It catalyses the reaction (2R,3R)-2,3-dihydroxy-3-methylpentanoate + NADP(+) = (S)-2-ethyl-2-hydroxy-3-oxobutanoate + NADPH + H(+). The protein operates within amino-acid biosynthesis; L-isoleucine biosynthesis; L-isoleucine from 2-oxobutanoate: step 2/4. It participates in amino-acid biosynthesis; L-valine biosynthesis; L-valine from pyruvate: step 2/4. Its function is as follows. Involved in the biosynthesis of branched-chain amino acids (BCAA). Catalyzes an alkyl-migration followed by a ketol-acid reduction of (S)-2-acetolactate (S2AL) to yield (R)-2,3-dihydroxy-isovalerate. In the isomerase reaction, S2AL is rearranged via a Mg-dependent methyl migration to produce 3-hydroxy-3-methyl-2-ketobutyrate (HMKB). In the reductase reaction, this 2-ketoacid undergoes a metal-dependent reduction by NADPH to yield (R)-2,3-dihydroxy-isovalerate. This is Ketol-acid reductoisomerase (NADP(+)) from Clavibacter sepedonicus (Clavibacter michiganensis subsp. sepedonicus).